A 466-amino-acid chain; its full sequence is MSIASVASVFKGEHAVGSTVTVRGWVRTRRDSKAGISFLAVYDGSCFNPIQGVVPNSLENYDNEVLKLTAGCSVIVTGEIVESPGAGQAYELQVTQVEVTGWVEDPDTYPMAAKRHSIEHLRELAHLRPRTNIIGAVARVRNCLSQAIHRFYHENGFVWVSTPLITASDCEGAGEMFRVSTLDMENLPRTSDGKVDYDKDFFGKEAFLTVSGQLNGETYACALSKIYTFGPTFRAENSNTSRHLAEFWMVEPEVAFATLSDIANLAEGMLKYAFNAVLAERMDDLQFFAQHVDKTVIERLQSFVSSDFAQVDYTDAVEILQKCGREFEFPVSWGIDLSSEHERYLAEEHFKAPVVVKNYPKDIKAFYMRLNEDGKTVAAMDVLAPGIGEIIGGSQREERLDVLDMRLEEMDLNKEDYWWYRDLRRYGTVPHAGFGLGFERLVSYVTGVSNIRDVIPFPRAPRTANF.

It belongs to the class-II aminoacyl-tRNA synthetase family. In terms of assembly, homodimer.

It is found in the cytoplasm. It carries out the reaction tRNA(Asn) + L-asparagine + ATP = L-asparaginyl-tRNA(Asn) + AMP + diphosphate + H(+). The polypeptide is Asparagine--tRNA ligase (Shewanella sp. (strain MR-4)).